Reading from the N-terminus, the 289-residue chain is UPF0276 protein BP2925 (289 aa).

This sequence belongs to the UPF0276 family.

The chain is UPF0276 protein BP2925 from Bordetella pertussis (strain Tohama I / ATCC BAA-589 / NCTC 13251).